Consider the following 166-residue polypeptide: Ureidoglycolate lyase (166 aa).

It belongs to the ureidoglycolate lyase family. As to quaternary structure, homodimer. The cofactor is Ni(2+).

It catalyses the reaction (S)-ureidoglycolate = urea + glyoxylate. It participates in nitrogen metabolism; (S)-allantoin degradation. Functionally, catalyzes the catabolism of the allantoin degradation intermediate (S)-ureidoglycolate, generating urea and glyoxylate. Involved in the utilization of allantoin as nitrogen source. The chain is Ureidoglycolate lyase from Rhizobium etli (strain CIAT 652).